A 595-amino-acid polypeptide reads, in one-letter code: DNA mismatch repair protein MutL (595 aa).

This sequence belongs to the DNA mismatch repair MutL/HexB family.

In terms of biological role, this protein is involved in the repair of mismatches in DNA. It is required for dam-dependent methyl-directed DNA mismatch repair. May act as a 'molecular matchmaker', a protein that promotes the formation of a stable complex between two or more DNA-binding proteins in an ATP-dependent manner without itself being part of a final effector complex. This chain is DNA mismatch repair protein MutL, found in Rhodopseudomonas palustris (strain TIE-1).